Here is a 518-residue protein sequence, read N- to C-terminus: GMP synthase [glutamine-hydrolyzing] (518 aa).

One can recognise a Glutamine amidotransferase type-1 domain in the interval 8 to 201; it reads TVLIIDFGSQ…VCKISGIKNN (194 aa). Residue C85 is the Nucleophile of the active site. Catalysis depends on residues H175 and E177. Residues 202–393 form the GMPS ATP-PPase domain; it reads WSMAAYRDQA…LGLPEEFIKR (192 aa). Residue 229–235 coordinates ATP; it reads SGGVDSS.

In terms of assembly, homodimer.

The enzyme catalyses XMP + L-glutamine + ATP + H2O = GMP + L-glutamate + AMP + diphosphate + 2 H(+). It functions in the pathway purine metabolism; GMP biosynthesis; GMP from XMP (L-Gln route): step 1/1. Its function is as follows. Catalyzes the synthesis of GMP from XMP. The sequence is that of GMP synthase [glutamine-hydrolyzing] from Bartonella bacilliformis (strain ATCC 35685 / KC583 / Herrer 020/F12,63).